Reading from the N-terminus, the 465-residue chain is Monocarboxylate transporter 4 (465 aa).

At 2–17 the chain is on the cytoplasmic side; it reads GGAVVDEGPTGVKAPD. Residues 18–38 traverse the membrane as a helical segment; that stretch reads GGWGWAVLFGCFVITGFSYAF. Residues 39-61 are Extracellular-facing; it reads PKAVSVFFKELIQEFGIGYSDTA. A helical membrane pass occupies residues 62–82; that stretch reads WISSILLAMLYGTGPLCSVCV. Over 83–84 the chain is Cytoplasmic; sequence NR. A helical membrane pass occupies residues 85-105; sequence FGCRPVMLVGGLFASLGMVAA. At 106–109 the chain is on the extracellular side; it reads SFCR. A helical transmembrane segment spans residues 110–130; that stretch reads SIIQVYLTTGVITGLGLALNF. Residues 131–149 lie on the Cytoplasmic side of the membrane; that stretch reads QPSLIMLNRYFSKRRPMAN. Residues 150 to 170 traverse the membrane as a helical segment; sequence GLAAAGSPVFLCALSPLGQLL. At 171–179 the chain is on the extracellular side; the sequence is QDRYGWRGG. A helical transmembrane segment spans residues 180-200; it reads FLILGGLLLNCCVCAALMRPL. Topologically, residues 201–227 are cytoplasmic; that stretch reads VVTAQPGSGPPRPSRRLLDLSVFRDRG. The helical transmembrane segment at 228–248 threads the bilayer; the sequence is FVLYAVAASVMVLGLFVPPVF. Residues 249 to 264 lie on the Extracellular side of the membrane; the sequence is VVSYAKDLGVPDTKAA. A helical transmembrane segment spans residues 265-285; sequence FLLTILGFIDIFARPAAGFVA. At 286 to 294 the chain is on the cytoplasmic side; sequence GLGKVRPYS. The helical transmembrane segment at 295–315 threads the bilayer; it reads VYLFSFSMFFNGLADLAGSTA. At 316-317 the chain is on the extracellular side; that stretch reads GD. Residues 318–338 traverse the membrane as a helical segment; sequence YGGLVVFCIFFGISYGMVGAL. Over 339-351 the chain is Cytoplasmic; it reads QFEVLMAIVGTHK. A helical transmembrane segment spans residues 352-372; sequence FSSAIGLVLLMEAVAVLVGPP. Topologically, residues 373 to 384 are extracellular; it reads SGGKLLDATHVY. A helical membrane pass occupies residues 385–405; sequence MYVFILAGAEVLTSSLILLLG. Residues 406–465 lie on the Cytoplasmic side of the membrane; that stretch reads NFFCIRKKPKEPQPEVAAAEEEKLHKPPADSGVDLREVEHFLKAEPEKNGEVVHTPETSV. Positions 419–438 are disordered; sequence PEVAAAEEEKLHKPPADSGV. Basolateral sorting signal regions lie at residues 423–441 and 441–465; these read AAEEEKLHKPPADSGVDLR and REVEHFLKAEPEKNGEVVHTPETSV. Over residues 425–438 the composition is skewed to basic and acidic residues; the sequence is EEEKLHKPPADSGV. Position 436 is a phosphoserine (Ser-436). Residue Thr-460 is modified to Phosphothreonine. Ser-464 carries the post-translational modification Phosphoserine.

The protein belongs to the major facilitator superfamily. Monocarboxylate porter (TC 2.A.1.13) family. As to quaternary structure, interacts with BSG; interaction mediates SLC16A3 targeting to the plasma membrane. As to expression, highly expressed in skeletal muscle.

It localises to the cell membrane. The protein localises to the basolateral cell membrane. The enzyme catalyses (S)-lactate(in) + H(+)(in) = (S)-lactate(out) + H(+)(out). It catalyses the reaction pyruvate(out) + H(+)(out) = pyruvate(in) + H(+)(in). Proton-dependent transporter of monocarboxylates such as L-lactate and pyruvate. Plays a predominant role in L-lactate efflux from highly glycolytic cells. In Homo sapiens (Human), this protein is Monocarboxylate transporter 4 (SLC16A3).